Here is a 249-residue protein sequence, read N- to C-terminus: MRLIHIPALESNYIWLLADSNQHCVIVDPGEASPVESVLTYKGLLPQAILLTHHHQDHLGGVPQLLRRFPDIPVYGPKETNKKGATILLKEGDQLFICSQTFSVIEVPGHTLGHIAYYSAPYLFCGDTLFSAGCGRLFEGTADQMYDSIQKLIQLPDETLICAGHEYTLSNLKFARSILPDDPQIALYQKQAEQLKAKNQPTLPALLKLERQVNLFLRCKESFLQKKMGTHKHDPLSVFSTLREMKDRF.

Residues histidine 53, histidine 55, aspartate 57, histidine 58, histidine 110, aspartate 127, and histidine 165 each contribute to the Zn(2+) site.

It belongs to the metallo-beta-lactamase superfamily. Glyoxalase II family. In terms of assembly, monomer. It depends on Zn(2+) as a cofactor.

The catalysed reaction is an S-(2-hydroxyacyl)glutathione + H2O = a 2-hydroxy carboxylate + glutathione + H(+). It functions in the pathway secondary metabolite metabolism; methylglyoxal degradation; (R)-lactate from methylglyoxal: step 2/2. Thiolesterase that catalyzes the hydrolysis of S-D-lactoyl-glutathione to form glutathione and D-lactic acid. The polypeptide is Hydroxyacylglutathione hydrolase (Hamiltonella defensa subsp. Acyrthosiphon pisum (strain 5AT)).